Consider the following 329-residue polypeptide: Beta-ketoacyl-[acyl-carrier-protein] synthase III (329 aa).

Catalysis depends on residues Cys-114 and His-255. The segment at 256–260 (QANQR) is ACP-binding. Asn-285 is a catalytic residue.

Belongs to the thiolase-like superfamily. FabH family. Homodimer.

The protein resides in the cytoplasm. It carries out the reaction malonyl-[ACP] + acetyl-CoA + H(+) = 3-oxobutanoyl-[ACP] + CO2 + CoA. It functions in the pathway lipid metabolism; fatty acid biosynthesis. Catalyzes the condensation reaction of fatty acid synthesis by the addition to an acyl acceptor of two carbons from malonyl-ACP. Catalyzes the first condensation reaction which initiates fatty acid synthesis and may therefore play a role in governing the total rate of fatty acid production. Possesses both acetoacetyl-ACP synthase and acetyl transacylase activities. Its substrate specificity determines the biosynthesis of branched-chain and/or straight-chain of fatty acids. This is Beta-ketoacyl-[acyl-carrier-protein] synthase III from Thermosynechococcus vestitus (strain NIES-2133 / IAM M-273 / BP-1).